The following is a 304-amino-acid chain: Acetylglutamate kinase (304 aa).

Substrate contacts are provided by residues 69 to 70 (GG), Arg91, and Asn202.

Belongs to the acetylglutamate kinase family. ArgB subfamily.

The protein resides in the cytoplasm. The enzyme catalyses N-acetyl-L-glutamate + ATP = N-acetyl-L-glutamyl 5-phosphate + ADP. It participates in amino-acid biosynthesis; L-arginine biosynthesis; N(2)-acetyl-L-ornithine from L-glutamate: step 2/4. Functionally, catalyzes the ATP-dependent phosphorylation of N-acetyl-L-glutamate. The sequence is that of Acetylglutamate kinase from Caulobacter sp. (strain K31).